A 353-amino-acid polypeptide reads, in one-letter code: Photosystem II protein D1 (353 aa).

Residue T2 is modified to N-acetylthreonine. T2 carries the phosphothreonine modification. 3 consecutive transmembrane segments (helical) span residues 29 to 46, 118 to 133, and 142 to 156; these read YIGW…TATS, HFLL…EWEL, and WIAV…AAAA. H118 contacts chlorophyll a. Y126 contacts pheophytin a. Residues D170 and E189 each coordinate [CaMn4O5] cluster. The helical transmembrane segment at 197–218 threads the bilayer; the sequence is FHMLGVAGVFGGSLFSAMHGSL. H198 serves as a coordination point for chlorophyll a. A quinone is bound by residues H215 and 264–265; that span reads SF. H215 is a Fe cation binding site. H272 serves as a coordination point for Fe cation. A helical transmembrane segment spans residues 274–288; the sequence is FLAAWPVVGIWFTAL. Positions 332, 333, 342, and 344 each coordinate [CaMn4O5] cluster. Positions 345 to 353 are excised as a propeptide; the sequence is SVDAPSING.

Belongs to the reaction center PufL/M/PsbA/D family. PSII is composed of 1 copy each of membrane proteins PsbA, PsbB, PsbC, PsbD, PsbE, PsbF, PsbH, PsbI, PsbJ, PsbK, PsbL, PsbM, PsbT, PsbX, PsbY, PsbZ, Psb30/Ycf12, at least 3 peripheral proteins of the oxygen-evolving complex and a large number of cofactors. It forms dimeric complexes. The D1/D2 heterodimer binds P680, chlorophylls that are the primary electron donor of PSII, and subsequent electron acceptors. It shares a non-heme iron and each subunit binds pheophytin, quinone, additional chlorophylls, carotenoids and lipids. D1 provides most of the ligands for the Mn4-Ca-O5 cluster of the oxygen-evolving complex (OEC). There is also a Cl(-1) ion associated with D1 and D2, which is required for oxygen evolution. The PSII complex binds additional chlorophylls, carotenoids and specific lipids. serves as cofactor. Post-translationally, tyr-161 forms a radical intermediate that is referred to as redox-active TyrZ, YZ or Y-Z. C-terminally processed by CTPA; processing is essential to allow assembly of the oxygen-evolving complex and thus photosynthetic growth.

The protein localises to the plastid. It is found in the chloroplast thylakoid membrane. The enzyme catalyses 2 a plastoquinone + 4 hnu + 2 H2O = 2 a plastoquinol + O2. Photosystem II (PSII) is a light-driven water:plastoquinone oxidoreductase that uses light energy to abstract electrons from H(2)O, generating O(2) and a proton gradient subsequently used for ATP formation. It consists of a core antenna complex that captures photons, and an electron transfer chain that converts photonic excitation into a charge separation. The D1/D2 (PsbA/PsbD) reaction center heterodimer binds P680, the primary electron donor of PSII as well as several subsequent electron acceptors. This is Photosystem II protein D1 from Adiantum capillus-veneris (Maidenhair fern).